The sequence spans 884 residues: Alanine--tRNA ligase (884 aa).

Zn(2+) contacts are provided by H562, H566, C674, and H678.

This sequence belongs to the class-II aminoacyl-tRNA synthetase family. The cofactor is Zn(2+).

It localises to the cytoplasm. It carries out the reaction tRNA(Ala) + L-alanine + ATP = L-alanyl-tRNA(Ala) + AMP + diphosphate. In terms of biological role, catalyzes the attachment of alanine to tRNA(Ala) in a two-step reaction: alanine is first activated by ATP to form Ala-AMP and then transferred to the acceptor end of tRNA(Ala). Also edits incorrectly charged Ser-tRNA(Ala) and Gly-tRNA(Ala) via its editing domain. The protein is Alanine--tRNA ligase of Rhizobium johnstonii (strain DSM 114642 / LMG 32736 / 3841) (Rhizobium leguminosarum bv. viciae).